The following is a 200-amino-acid chain: MEQTEVLKPRTLADLIRILHQLFAGDEVNVEEVQAIMEAYESDPTEWAMYAKFDQYRYTRNLVDQGNGKFNLMILCWGEGHGSSIHDHTNSHCFLKMLQGNLKETLFAWPDKKSNEMVKKSERVLRENQCAYINDSIGLHRVENISHTEPAVSLHLYSPPFDTCHAFDQRTGHKNKVTMTFHSKFGIRTPNATSGSLENN.

Fe cation-binding residues include His-86, His-88, and His-140. The segment at residues 93 to 157 (CFLKMLQGNL…TEPAVSLHLY (65 aa)) is a cross-link (3'-(S-cysteinyl)-tyrosine (Cys-Tyr)).

This sequence belongs to the cysteine dioxygenase family. Monomer. Requires Fe(2+) as cofactor. The cofactor is Ni(2+). Zn(2+) is required as a cofactor. Post-translationally, the thioether cross-link between Cys-93 and Tyr-157 plays a structural role through stabilizing the Fe(2+) ion, and prevents the production of highly damaging free hydroxyl radicals by holding the oxygen radical via hydroxyl hydrogen. Highly expressed in liver and placenta. Low expression in heart, brain and pancreas. Also detected in hepatoblastoma Hep-G2 cells.

It catalyses the reaction L-cysteine + O2 = 3-sulfino-L-alanine + H(+). It participates in organosulfur biosynthesis; taurine biosynthesis; hypotaurine from L-cysteine: step 1/2. Its function is as follows. Catalyzes the oxidation of cysteine to cysteine sulfinic acid with addition of molecular dioxygen. This Homo sapiens (Human) protein is Cysteine dioxygenase type 1 (CDO1).